Consider the following 513-residue polypeptide: Putative thymidine phosphorylase (513 aa).

This sequence belongs to the thymidine/pyrimidine-nucleoside phosphorylase family. Type 2 subfamily.

The catalysed reaction is thymidine + phosphate = 2-deoxy-alpha-D-ribose 1-phosphate + thymine. This Rhodopseudomonas palustris (strain BisA53) protein is Putative thymidine phosphorylase.